We begin with the raw amino-acid sequence, 548 residues long: Membrane protein insertase YidC (548 aa).

A helical membrane pass occupies residues 6–26 (NLLVIALLFVSFMIWQAWEQD). A disordered region spans residues 28-56 (NPQPQTQQTTQTTTTAAGSAADQGVPASG). The segment covering 29-42 (PQPQTQQTTQTTTT) has biased composition (low complexity). 4 helical membrane passes run 350-370 (FVGNWGFSIIIITFIVRGIMY), 424-444 (FPLIIQMPIFLALYYMLMGSI), 458-478 (LSAQDPYYILPILMGVTMFFI), and 499-519 (PVIFTVFFLWFPSGLVLYYIV).

The protein belongs to the OXA1/ALB3/YidC family. Type 1 subfamily. In terms of assembly, interacts with the Sec translocase complex via SecD. Specifically interacts with transmembrane segments of nascent integral membrane proteins during membrane integration.

The protein resides in the cell inner membrane. In terms of biological role, required for the insertion and/or proper folding and/or complex formation of integral membrane proteins into the membrane. Involved in integration of membrane proteins that insert both dependently and independently of the Sec translocase complex, as well as at least some lipoproteins. Aids folding of multispanning membrane proteins. This is Membrane protein insertase YidC from Salmonella enteritidis PT4 (strain P125109).